A 273-amino-acid polypeptide reads, in one-letter code: Putative phosphoenolpyruvate synthase regulatory protein (273 aa).

Residue 153–160 (GVSRSGKT) coordinates ADP.

The protein belongs to the pyruvate, phosphate/water dikinase regulatory protein family. PSRP subfamily.

It catalyses the reaction [pyruvate, water dikinase] + ADP = [pyruvate, water dikinase]-phosphate + AMP + H(+). The catalysed reaction is [pyruvate, water dikinase]-phosphate + phosphate + H(+) = [pyruvate, water dikinase] + diphosphate. Functionally, bifunctional serine/threonine kinase and phosphorylase involved in the regulation of the phosphoenolpyruvate synthase (PEPS) by catalyzing its phosphorylation/dephosphorylation. This chain is Putative phosphoenolpyruvate synthase regulatory protein, found in Polaromonas sp. (strain JS666 / ATCC BAA-500).